The following is a 312-amino-acid chain: MVNQSSTPGFLLLGFSEHPGLERTLFVVVLTSYLLTLVGNTLIILLSALDPKLHSPMYFFLSNLSFLDLCFTTSCVPQMLVNLWGPKKTISFLDCSVQIFIFLSLGTTECILLTVMAFDRYVAVCQPLHYATIIHPRLCWQLASVAWVIGLVESVVQTPSTLHLPFCPDRQVDDFVCEVPALIRLSCEDTSYNEIQVAVASVFILVVPLSLILVSYGAITWAVLRINSAKGRRKAFGTCSSHLTVVTLFYSSVIAVYLQPKNPYAQERGKFFGLFYAVGTPSLNPLIYTLRNKEVTRAFRRLLGKEMGLTQS.

At 1 to 23 (MVNQSSTPGFLLLGFSEHPGLER) the chain is on the extracellular side. Asparagine 3 carries N-linked (GlcNAc...) asparagine glycosylation. Residues 24-47 (TLFVVVLTSYLLTLVGNTLIILLS) form a helical membrane-spanning segment. Residues 48 to 55 (ALDPKLHS) lie on the Cytoplasmic side of the membrane. A helical membrane pass occupies residues 56 to 77 (PMYFFLSNLSFLDLCFTTSCVP). The Extracellular portion of the chain corresponds to 78-98 (QMLVNLWGPKKTISFLDCSVQ). A disulfide bridge connects residues cysteine 95 and cysteine 187. The helical transmembrane segment at 99–118 (IFIFLSLGTTECILLTVMAF) threads the bilayer. Topologically, residues 119–137 (DRYVAVCQPLHYATIIHPR) are cytoplasmic. The helical transmembrane segment at 138–156 (LCWQLASVAWVIGLVESVV) threads the bilayer. Residues 157-193 (QTPSTLHLPFCPDRQVDDFVCEVPALIRLSCEDTSYN) are Extracellular-facing. Residues 194 to 217 (EIQVAVASVFILVVPLSLILVSYG) traverse the membrane as a helical segment. The Cytoplasmic segment spans residues 218–234 (AITWAVLRINSAKGRRK). The helical transmembrane segment at 235-257 (AFGTCSSHLTVVTLFYSSVIAVY) threads the bilayer. Over 258 to 270 (LQPKNPYAQERGK) the chain is Extracellular. The chain crosses the membrane as a helical span at residues 271-290 (FFGLFYAVGTPSLNPLIYTL). The Cytoplasmic segment spans residues 291-312 (RNKEVTRAFRRLLGKEMGLTQS).

This sequence belongs to the G-protein coupled receptor 1 family.

The protein localises to the cell membrane. Odorant receptor. The polypeptide is Olfactory receptor 2H2 (OR2H2) (Homo sapiens (Human)).